Here is a 321-residue protein sequence, read N- to C-terminus: Aspartate carbamoyltransferase catalytic subunit (321 aa).

The carbamoyl phosphate site is built by arginine 57 and threonine 58. Position 85 (lysine 85) interacts with L-aspartate. Carbamoyl phosphate is bound by residues arginine 107, histidine 142, and glutamine 145. 2 residues coordinate L-aspartate: arginine 175 and arginine 229. Residues glycine 270 and proline 271 each contribute to the carbamoyl phosphate site.

Belongs to the aspartate/ornithine carbamoyltransferase superfamily. ATCase family. As to quaternary structure, heterododecamer (2C3:3R2) of six catalytic PyrB chains organized as two trimers (C3), and six regulatory PyrI chains organized as three dimers (R2).

It carries out the reaction carbamoyl phosphate + L-aspartate = N-carbamoyl-L-aspartate + phosphate + H(+). It participates in pyrimidine metabolism; UMP biosynthesis via de novo pathway; (S)-dihydroorotate from bicarbonate: step 2/3. Catalyzes the condensation of carbamoyl phosphate and aspartate to form carbamoyl aspartate and inorganic phosphate, the committed step in the de novo pyrimidine nucleotide biosynthesis pathway. The protein is Aspartate carbamoyltransferase catalytic subunit of Mycobacterium leprae (strain TN).